The sequence spans 511 residues: Cytochrome P450 monooxygenase prhD (511 aa).

Asn-7 carries an N-linked (GlcNAc...) asparagine glycan. A helical membrane pass occupies residues 10-30; that stretch reads GNGMGLLIPLGLSWLIWTILL. Cys-444 provides a ligand contact to heme. Asn-502 carries N-linked (GlcNAc...) asparagine glycosylation.

It belongs to the cytochrome P450 family. Heme is required as a cofactor.

The protein localises to the membrane. It participates in secondary metabolite biosynthesis; terpenoid biosynthesis. Cytochrome P450 monooxygenase; part of the gene cluster that mediates the biosynthesis of paraherquonin, a meroterpenoid with a unique, highly congested hexacyclic molecular architecture. The first step of the pathway is the synthesis of 3,5-dimethylorsellinic acid (DMOA) by the polyketide synthase prhL. Synthesis of DMOA is followed by farnesylation by the prenyltransferase prhE, methylesterification by the methyl-transferase prhM, epoxidation of the prenyl chain by the flavin-dependent monooxygenase prhF, and cyclization of the farnesyl moiety by the terpene cyclase prhH, to yield the tetracyclic intermediate, protoaustinoid A. The short chain dehydrogenase prhI then oxidizes the C-3 alcohol group of the terpene cyclase product to transform protoaustinoid A into protoaustinoid B. The FAD-binding monooxygenase prhJ catalyzes the oxidation of protoaustinoid B into preaustinoid A which is further oxidized into preaustinoid A1 by FAD-binding monooxygenase phrK. Finally, prhA leads to berkeleydione via the berkeleyone B intermediate. PrhA is a multifunctional dioxygenase that first desaturates at C5-C6 to form berkeleyone B, followed by rearrangement of the A/B-ring to form the cycloheptadiene moiety in berkeleydione. Berkeleydione serves as the key intermediate for the biosynthesis of paraherquonin as well as many other meroterpenoids. The cytochrome P450 monooxygenases prhB, prhD, and prhN, as well as the isomerase prhC, are probably involved in the late stage of paraherquonin biosynthesis, after the production of berkeleydione. Especially prhC might be a multifunctional enzyme that catalyzes the D-ring expansion via intramolecular methoxy rearrangement, as well as the hydrolysis of the expanded D-ring. The protein is Cytochrome P450 monooxygenase prhD of Penicillium brasilianum.